A 246-amino-acid chain; its full sequence is Enolase-phosphatase E1 (246 aa).

Mg(2+)-binding residues include D15 and E17. Substrate is bound by residues S134–S135 and K174. D201 provides a ligand contact to Mg(2+).

The protein belongs to the HAD-like hydrolase superfamily. MasA/MtnC family. As to quaternary structure, monomer. It depends on Mg(2+) as a cofactor.

It is found in the cytoplasm. Its subcellular location is the nucleus. The enzyme catalyses 5-methylsulfanyl-2,3-dioxopentyl phosphate + H2O = 1,2-dihydroxy-5-(methylsulfanyl)pent-1-en-3-one + phosphate. The protein operates within amino-acid biosynthesis; L-methionine biosynthesis via salvage pathway; L-methionine from S-methyl-5-thio-alpha-D-ribose 1-phosphate: step 3/6. Its pathway is amino-acid biosynthesis; L-methionine biosynthesis via salvage pathway; L-methionine from S-methyl-5-thio-alpha-D-ribose 1-phosphate: step 4/6. Bifunctional enzyme that catalyzes the enolization of 2,3-diketo-5-methylthiopentyl-1-phosphate (DK-MTP-1-P) into the intermediate 2-hydroxy-3-keto-5-methylthiopentenyl-1-phosphate (HK-MTPenyl-1-P), which is then dephosphorylated to form the acireductone 1,2-dihydroxy-3-keto-5-methylthiopentene (DHK-MTPene). The polypeptide is Enolase-phosphatase E1 (Debaryomyces hansenii (strain ATCC 36239 / CBS 767 / BCRC 21394 / JCM 1990 / NBRC 0083 / IGC 2968) (Yeast)).